We begin with the raw amino-acid sequence, 191 residues long: Fe/S biogenesis protein NfuA (191 aa).

Cys149 and Cys152 together coordinate [4Fe-4S] cluster.

This sequence belongs to the NfuA family. Homodimer. [4Fe-4S] cluster is required as a cofactor.

Its function is as follows. Involved in iron-sulfur cluster biogenesis. Binds a 4Fe-4S cluster, can transfer this cluster to apoproteins, and thereby intervenes in the maturation of Fe/S proteins. Could also act as a scaffold/chaperone for damaged Fe/S proteins. The sequence is that of Fe/S biogenesis protein NfuA from Yersinia pseudotuberculosis serotype O:1b (strain IP 31758).